We begin with the raw amino-acid sequence, 324 residues long: G patch domain-containing protein 4 (324 aa).

2 disordered regions span residues 1-30 (MSASSVKKSQGMKFAEEQMHKHGWKEGKGL) and 123-324 (LSGG…NKSE). In terms of domain architecture, G-patch spans 11-57 (GMKFAEEQMHKHGWKEGKGLGRRENGICEAIKVKVKCDHAGVGHNSA). A compositionally biased stretch (basic and acidic residues) spans 14–30 (FAEEQMHKHGWKEGKGL). Residues 131–141 (KEPSSSESSDS) are compositionally biased toward low complexity. Positions 186–215 (SRLEEQEREFLAKYGKKEQKNKERDEKLER) are enriched in basic and acidic residues. Basic residues predominate over residues 244–253 (HKKKKKKRKR). The span at 254 to 270 (ADSERKEESQENGHEEE) shows a compositional bias: basic and acidic residues. The segment covering 296–309 (PSTQEEQPTESSDF) has biased composition (polar residues). The span at 312–324 (KPKKKKKKKNKSE) shows a compositional bias: basic residues.

This Xenopus laevis (African clawed frog) protein is G patch domain-containing protein 4 (gpatch4).